The chain runs to 560 residues: MDSKKGRPKAAAGKWQTLHPGPKTRAAAGKPGENRPPQRKAGWQAREPASAESPQAPTGPAEDRAARAIQGAFRQLRARRELARRREERREYLEQMETPQKEAYLAPVRREQEAARRLREQEEAAQRERREELQRRRRLLDAAFDGDVGEIRAVLKEVEQLLTREGVGHDEAGEARRLQRRVALAECEDSYGNTPLSEAAAGGQPLAIQLRAELGASPNSKGAFGPTPLYRAAFGGHLAAVEVLLKLGADPRVYAEDGSTPERVASLDTVVSVLRSWDLSLTEAMLQNMEAEQQRRAQEAQRHKEAEAERCGSMTLKVQQLTREQQQCHKELQQAYCELSRRISEHDQCEWRCMDKTKLTLQAIKDTEAQVDRLRQEAQKAEEALAMARLELREQTQEGEEEAPGLKCQVTELHDVLMKDVGNRIRADGRWPLVIDPLGQAATFLRYQDTNYVDTVNPEPLRPETMWLALLGALRYGKPLVFDLREEDLFPVVQRQLEAVQERYLSLLRPTDGPEYSPTQFQEQRLEHFRLFFVTKVQWPPAEQLQVLLPVRVQLPGTGL.

A disordered region spans residues 1–72 (MDSKKGRPKA…DRAARAIQGA (72 aa)). Residues 62–91 (EDRAARAIQGAFRQLRARRELARRREERRE) form the IQ domain. ANK repeat units follow at residues 191–223 (YGNT…SKGA) and 224–253 (FGPT…DPRV). Positions 281–398 (LTEAMLQNME…RLELREQTQE (118 aa)) form a coiled coil.

This Homo sapiens (Human) protein is IQ motif and ankyrin repeat domain-containing protein 1.